We begin with the raw amino-acid sequence, 497 residues long: NAD(P)H-quinone oxidoreductase chain 4, chloroplastic (497 aa).

13 helical membrane-spanning segments follow: residues 4–24, 35–55, 87–107, 113–133, 134–154, 167–187, 207–227, 242–262, 274–294, 313–333, 386–406, 416–436, and 462–482; these read LPWL…IPLF, YTLG…CCHF, MGLI…AWPV, LFHF…ASQD, ILLF…LLSI, FILY…TIGL, IALE…KLPI, HYST…YGLI, AIFA…ASLI, MGFV…GAIL, LALP…GIVI, IVIT…LLSM, and IFIS…PNLV.

This sequence belongs to the complex I subunit 4 family.

Its subcellular location is the plastid. It localises to the chloroplast thylakoid membrane. It catalyses the reaction a plastoquinone + NADH + (n+1) H(+)(in) = a plastoquinol + NAD(+) + n H(+)(out). The enzyme catalyses a plastoquinone + NADPH + (n+1) H(+)(in) = a plastoquinol + NADP(+) + n H(+)(out). The polypeptide is NAD(P)H-quinone oxidoreductase chain 4, chloroplastic (Angiopteris evecta (Mule's foot fern)).